The chain runs to 187 residues: UPF0301 protein VC_0467 (187 aa).

The protein belongs to the UPF0301 (AlgH) family.

This chain is UPF0301 protein VC_0467, found in Vibrio cholerae serotype O1 (strain ATCC 39315 / El Tor Inaba N16961).